The following is a 216-amino-acid chain: Uracil phosphoribosyltransferase (216 aa).

5-phospho-alpha-D-ribose 1-diphosphate-binding positions include arginine 85, arginine 110, and 135 to 143 (DPMVATGYS). Residues isoleucine 200 and 205–207 (GDA) each bind uracil. Residue aspartate 206 participates in 5-phospho-alpha-D-ribose 1-diphosphate binding.

This sequence belongs to the UPRTase family. Mg(2+) serves as cofactor.

It carries out the reaction UMP + diphosphate = 5-phospho-alpha-D-ribose 1-diphosphate + uracil. It functions in the pathway pyrimidine metabolism; UMP biosynthesis via salvage pathway; UMP from uracil: step 1/1. Allosterically activated by GTP. Functionally, catalyzes the conversion of uracil and 5-phospho-alpha-D-ribose 1-diphosphate (PRPP) to UMP and diphosphate. The polypeptide is Uracil phosphoribosyltransferase (Burkholderia vietnamiensis (strain G4 / LMG 22486) (Burkholderia cepacia (strain R1808))).